The following is a 1393-amino-acid chain: DNA-directed RNA polymerase subunit beta' (1393 aa).

The Zn(2+) site is built by cysteine 70, cysteine 72, cysteine 85, and cysteine 88. Residues aspartate 461, aspartate 463, and aspartate 465 each coordinate Mg(2+). Zn(2+)-binding residues include cysteine 804, cysteine 877, cysteine 884, and cysteine 887.

Belongs to the RNA polymerase beta' chain family. In terms of assembly, the RNAP catalytic core consists of 2 alpha, 1 beta, 1 beta' and 1 omega subunit. When a sigma factor is associated with the core the holoenzyme is formed, which can initiate transcription. Mg(2+) serves as cofactor. The cofactor is Zn(2+).

The catalysed reaction is RNA(n) + a ribonucleoside 5'-triphosphate = RNA(n+1) + diphosphate. Functionally, DNA-dependent RNA polymerase catalyzes the transcription of DNA into RNA using the four ribonucleoside triphosphates as substrates. In Rhodospirillum rubrum (strain ATCC 11170 / ATH 1.1.1 / DSM 467 / LMG 4362 / NCIMB 8255 / S1), this protein is DNA-directed RNA polymerase subunit beta'.